Here is a 157-residue protein sequence, read N- to C-terminus: Small ribosomal subunit protein uS7 (157 aa).

It belongs to the universal ribosomal protein uS7 family. As to quaternary structure, part of the 30S ribosomal subunit. Contacts proteins S9 and S11.

In terms of biological role, one of the primary rRNA binding proteins, it binds directly to 16S rRNA where it nucleates assembly of the head domain of the 30S subunit. Is located at the subunit interface close to the decoding center, probably blocks exit of the E-site tRNA. The polypeptide is Small ribosomal subunit protein uS7 (Eikenella corrodens).